The primary structure comprises 458 residues: Methylenetetrahydrofolate--tRNA-(uracil-5-)-methyltransferase TrmFO (458 aa).

Residue 12-17 (GAGLAG) participates in FAD binding.

The protein belongs to the MnmG family. TrmFO subfamily. FAD is required as a cofactor.

The protein resides in the cytoplasm. The enzyme catalyses uridine(54) in tRNA + (6R)-5,10-methylene-5,6,7,8-tetrahydrofolate + NADH + H(+) = 5-methyluridine(54) in tRNA + (6S)-5,6,7,8-tetrahydrofolate + NAD(+). It carries out the reaction uridine(54) in tRNA + (6R)-5,10-methylene-5,6,7,8-tetrahydrofolate + NADPH + H(+) = 5-methyluridine(54) in tRNA + (6S)-5,6,7,8-tetrahydrofolate + NADP(+). In terms of biological role, catalyzes the folate-dependent formation of 5-methyl-uridine at position 54 (M-5-U54) in all tRNAs. In Deinococcus geothermalis (strain DSM 11300 / CIP 105573 / AG-3a), this protein is Methylenetetrahydrofolate--tRNA-(uracil-5-)-methyltransferase TrmFO.